The sequence spans 311 residues: L-lactate dehydrogenase (311 aa).

Residues V12, D33, K38, Y63, and G77–A78 contribute to the NAD(+) site. Substrate-binding residues include Q80 and R86. Residues S99, V116–N118, and S141 contribute to the NAD(+) site. N118 to D121 contacts substrate. Position 146–149 (D146–R149) interacts with substrate. Residues R151 and H166 each contribute to the beta-D-fructose 1,6-bisphosphate site. Catalysis depends on H173, which acts as the Proton acceptor. The residue at position 219 (Y219) is a Phosphotyrosine. Residue T228 participates in substrate binding.

It belongs to the LDH/MDH superfamily. LDH family. As to quaternary structure, homotetramer.

Its subcellular location is the cytoplasm. It catalyses the reaction (S)-lactate + NAD(+) = pyruvate + NADH + H(+). It functions in the pathway fermentation; pyruvate fermentation to lactate; (S)-lactate from pyruvate: step 1/1. With respect to regulation, allosterically activated by fructose 1,6-bisphosphate (FBP). Catalyzes the conversion of lactate to pyruvate. This is L-lactate dehydrogenase from Thermoanaerobacterium saccharolyticum (strain DSM 8691 / JW/SL-YS485).